The sequence spans 343 residues: Aspartate beta-hydroxylase domain-containing protein 2 (343 aa).

Residues 1-31 (MWLEWLVAWSWSLDGLRDCIATGIQSVRDCD) lie on the Cytoplasmic side of the membrane. A helical membrane pass occupies residues 32–52 (GTAVITVACLLILFVWYCYHV). Over 53–343 (GREQPRPHVS…ALDFIFAPGR (291 aa)) the chain is Lumenal. 2 N-linked (GlcNAc...) asparagine glycosylation sites follow: N77 and N185. Positions 202 and 246 each coordinate 2-oxoglutarate. Residue H257 participates in Fe cation binding. Position 266-268 (266-268 (RCH)) interacts with 2-oxoglutarate. Fe cation is bound at residue H302. R315 is a binding site for 2-oxoglutarate.

Belongs to the aspartyl/asparaginyl beta-hydroxylase family. Fe cation serves as cofactor.

It localises to the membrane. In terms of biological role, may function as 2-oxoglutarate-dependent dioxygenase. In Mus musculus (Mouse), this protein is Aspartate beta-hydroxylase domain-containing protein 2 (Asphd2).